A 450-amino-acid polypeptide reads, in one-letter code: Glucose-6-phosphate isomerase (450 aa).

Glutamate 290 serves as the catalytic Proton donor. Residues histidine 311 and lysine 425 contribute to the active site.

Belongs to the GPI family.

The protein localises to the cytoplasm. It catalyses the reaction alpha-D-glucose 6-phosphate = beta-D-fructose 6-phosphate. It functions in the pathway carbohydrate biosynthesis; gluconeogenesis. Its pathway is carbohydrate degradation; glycolysis; D-glyceraldehyde 3-phosphate and glycerone phosphate from D-glucose: step 2/4. Catalyzes the reversible isomerization of glucose-6-phosphate to fructose-6-phosphate. The polypeptide is Glucose-6-phosphate isomerase (Listeria monocytogenes serovar 1/2a (strain ATCC BAA-679 / EGD-e)).